The following is a 468-amino-acid chain: ATP synthase subunit beta (468 aa).

Residue Gly155–Thr162 coordinates ATP.

This sequence belongs to the ATPase alpha/beta chains family. As to quaternary structure, F-type ATPases have 2 components, CF(1) - the catalytic core - and CF(0) - the membrane proton channel. CF(1) has five subunits: alpha(3), beta(3), gamma(1), delta(1), epsilon(1). CF(0) has three main subunits: a(1), b(2) and c(9-12). The alpha and beta chains form an alternating ring which encloses part of the gamma chain. CF(1) is attached to CF(0) by a central stalk formed by the gamma and epsilon chains, while a peripheral stalk is formed by the delta and b chains.

Its subcellular location is the cell membrane. It catalyses the reaction ATP + H2O + 4 H(+)(in) = ADP + phosphate + 5 H(+)(out). Its function is as follows. Produces ATP from ADP in the presence of a proton gradient across the membrane. The catalytic sites are hosted primarily by the beta subunits. This chain is ATP synthase subunit beta, found in Streptococcus pyogenes serotype M3 (strain ATCC BAA-595 / MGAS315).